The chain runs to 434 residues: Mitochondrial distribution and morphology protein 10 (434 aa).

It belongs to the MDM10 family. In terms of assembly, component of the ER-mitochondria encounter structure (ERMES) or MDM complex, composed of mmm1, mdm10, mdm12 and mdm34. Associates with the mitochondrial outer membrane sorting assembly machinery SAM(core) complex.

Its subcellular location is the mitochondrion outer membrane. Functionally, component of the ERMES/MDM complex, which serves as a molecular tether to connect the endoplasmic reticulum and mitochondria. Components of this complex are involved in the control of mitochondrial shape and protein biogenesis and may function in phospholipid exchange. mdm10 is involved in the late assembly steps of the general translocase of the mitochondrial outer membrane (TOM complex). Functions in the tom40-specific route of the assembly of outer membrane beta-barrel proteins, including the association of tom40 with the receptor tom22 and small TOM proteins. Can associate with the SAM(core) complex as well as the mdm12-mmm1 complex, both involved in late steps of the major beta-barrel assembly pathway, that is responsible for biogenesis of all outer membrane beta-barrel proteins. May act as a switch that shuttles between both complexes and channels precursor proteins into the tom40-specific pathway. Plays a role in mitochondrial morphology and in the inheritance of mitochondria. In Aspergillus niger (strain ATCC MYA-4892 / CBS 513.88 / FGSC A1513), this protein is Mitochondrial distribution and morphology protein 10 (mdmB).